We begin with the raw amino-acid sequence, 270 residues long: MENIGRQRPIGVFDSGIGGLTNVRALMERLPMENIIYFGDTARVPYGTKSKATIENFSMQIVDFLLEHDVKAMVIACNTIAAVAGQKIRQKTGNMPVLDVISAGAKAALATTRNNKIGIIATNTTVNSNAYARAIHRNNPDTLVRTQAAPLLVPLVEEGWLEHEVTRLTVCEYLKPLLADGIDTLVLGCTHFPLLKPLIGREAHNVALVDSAITTAEETARVLAQEGLLNTDNNNPDYRFYVSDIPLKFRTIGERFLGRTMEQIEMVSLG.

Substrate contacts are provided by residues 14-15 (DS) and 46-47 (YG). Cys-77 (proton donor/acceptor) is an active-site residue. Residue 78–79 (NT) coordinates substrate. Cys-189 acts as the Proton donor/acceptor in catalysis. 190-191 (TH) is a binding site for substrate.

The protein belongs to the aspartate/glutamate racemases family.

The catalysed reaction is L-glutamate = D-glutamate. Its pathway is cell wall biogenesis; peptidoglycan biosynthesis. Its function is as follows. Provides the (R)-glutamate required for cell wall biosynthesis. The protein is Glutamate racemase of Neisseria meningitidis serogroup C.